Here is a 482-residue protein sequence, read N- to C-terminus: UDP-N-acetylmuramoyl-L-alanyl-D-glutamate--2,6-diaminopimelate ligase (482 aa).

Position 30 (S30) interacts with UDP-N-acetyl-alpha-D-muramoyl-L-alanyl-D-glutamate. 111 to 117 (GTNGKTT) provides a ligand contact to ATP. UDP-N-acetyl-alpha-D-muramoyl-L-alanyl-D-glutamate contacts are provided by residues 153 to 154 (TT), S180, Q186, and R188. K220 is subject to N6-carboxylysine. Meso-2,6-diaminopimelate-binding positions include R378, 402-405 (DNPR), G455, and E459. The Meso-diaminopimelate recognition motif signature appears at 402-405 (DNPR).

This sequence belongs to the MurCDEF family. MurE subfamily. Requires Mg(2+) as cofactor. In terms of processing, carboxylation is probably crucial for Mg(2+) binding and, consequently, for the gamma-phosphate positioning of ATP.

Its subcellular location is the cytoplasm. It catalyses the reaction UDP-N-acetyl-alpha-D-muramoyl-L-alanyl-D-glutamate + meso-2,6-diaminopimelate + ATP = UDP-N-acetyl-alpha-D-muramoyl-L-alanyl-gamma-D-glutamyl-meso-2,6-diaminopimelate + ADP + phosphate + H(+). It functions in the pathway cell wall biogenesis; peptidoglycan biosynthesis. In terms of biological role, catalyzes the addition of meso-diaminopimelic acid to the nucleotide precursor UDP-N-acetylmuramoyl-L-alanyl-D-glutamate (UMAG) in the biosynthesis of bacterial cell-wall peptidoglycan. The polypeptide is UDP-N-acetylmuramoyl-L-alanyl-D-glutamate--2,6-diaminopimelate ligase (Bacteroides thetaiotaomicron (strain ATCC 29148 / DSM 2079 / JCM 5827 / CCUG 10774 / NCTC 10582 / VPI-5482 / E50)).